Here is a 480-residue protein sequence, read N- to C-terminus: Adenosylhomocysteinase (480 aa).

Thr-63, Asp-142, and Glu-203 together coordinate substrate. Residue 204–206 (TTT) coordinates NAD(+). The substrate site is built by Lys-233 and Asp-237. Residues Asn-238, 267–272 (GYGDVG), Glu-290, Asn-325, 346–348 (IGH), and Asn-394 each bind NAD(+).

It belongs to the adenosylhomocysteinase family. It depends on NAD(+) as a cofactor.

It localises to the cytoplasm. It carries out the reaction S-adenosyl-L-homocysteine + H2O = L-homocysteine + adenosine. It participates in amino-acid biosynthesis; L-homocysteine biosynthesis; L-homocysteine from S-adenosyl-L-homocysteine: step 1/1. Functionally, may play a key role in the regulation of the intracellular concentration of adenosylhomocysteine. The polypeptide is Adenosylhomocysteinase (Xylella fastidiosa (strain 9a5c)).